A 397-amino-acid chain; its full sequence is Ribosomal RNA large subunit methyltransferase I (397 aa).

The 78-residue stretch at 2–79 (TAAIYLVKGR…KEEINKAFFV (78 aa)) folds into the PUA domain.

This sequence belongs to the methyltransferase superfamily. RlmI family.

It localises to the cytoplasm. The catalysed reaction is cytidine(1962) in 23S rRNA + S-adenosyl-L-methionine = 5-methylcytidine(1962) in 23S rRNA + S-adenosyl-L-homocysteine + H(+). Specifically methylates the cytosine at position 1962 (m5C1962) of 23S rRNA. The protein is Ribosomal RNA large subunit methyltransferase I of Vibrio parahaemolyticus serotype O3:K6 (strain RIMD 2210633).